The primary structure comprises 450 residues: Divalent metal cation transporter MntH (450 aa).

Transmembrane regions (helical) follow at residues 44–64 (LLAFVGPGYLVSVGYMDPGNW), 77–97 (TLLSVILLSNLMAILLQSLAA), 121–141 (FLLWLACEAAIIACDLAEVIG), 152–172 (IPLIGGALIAALDAFLLLLLM), 181–201 (AFVIALLAVIAVCFAVQIVAA), 218–238 (IFTNPEMLYIAIGIIGATVMP), 273–293 (IALMLALFINAAILVVAAATF), 310–330 (LLSPLLGLGIASTLFAIALLA), 366–386 (GIAIIPVIIVTAIYGERGTAD), 387–407 (LLVFSQVVLSMQLPFAVIPLV), and 419–439 (FAISPYVAAIAWIVAGVIVVL).

Belongs to the NRAMP family.

It is found in the cell inner membrane. H(+)-stimulated, divalent metal cation uptake system. The protein is Divalent metal cation transporter MntH of Bradyrhizobium diazoefficiens (strain JCM 10833 / BCRC 13528 / IAM 13628 / NBRC 14792 / USDA 110).